Here is a 333-residue protein sequence, read N- to C-terminus: Glycerol-3-phosphate dehydrogenase [NAD(P)+] 2 (333 aa).

Positions 12, 13, 32, and 106 each coordinate NADPH. 2 residues coordinate sn-glycerol 3-phosphate: Lys-106 and Gly-134. NADPH is bound at residue Ala-138. 5 residues coordinate sn-glycerol 3-phosphate: Lys-189, Asp-242, Ser-252, Arg-253, and Asn-254. Lys-189 (proton acceptor) is an active-site residue. Arg-253 lines the NADPH pocket. Residues Val-277 and Glu-279 each contribute to the NADPH site.

This sequence belongs to the NAD-dependent glycerol-3-phosphate dehydrogenase family.

The protein localises to the cytoplasm. The enzyme catalyses sn-glycerol 3-phosphate + NAD(+) = dihydroxyacetone phosphate + NADH + H(+). The catalysed reaction is sn-glycerol 3-phosphate + NADP(+) = dihydroxyacetone phosphate + NADPH + H(+). It participates in membrane lipid metabolism; glycerophospholipid metabolism. Functionally, catalyzes the reduction of the glycolytic intermediate dihydroxyacetone phosphate (DHAP) to sn-glycerol 3-phosphate (G3P), the key precursor for phospholipid synthesis. The sequence is that of Glycerol-3-phosphate dehydrogenase [NAD(P)+] 2 from Sphingopyxis alaskensis (strain DSM 13593 / LMG 18877 / RB2256) (Sphingomonas alaskensis).